A 429-amino-acid polypeptide reads, in one-letter code: Dual-specificity RNA methyltransferase RlmN (429 aa).

The segment at 1-23 (MRAMQTHTEIAPMPIPGHVDPVP) is disordered. Glutamate 128 serves as the catalytic Proton acceptor. The region spanning 134–397 (DADRGTLCVS…APVRTPRGRD (264 aa)) is the Radical SAM core domain. Cysteine 141 and cysteine 402 are joined by a disulfide. Residues cysteine 148, cysteine 152, and cysteine 155 each coordinate [4Fe-4S] cluster. S-adenosyl-L-methionine is bound by residues 226–227 (GE), serine 258, 280–282 (SLH), and asparagine 359. The S-methylcysteine intermediate role is filled by cysteine 402.

Belongs to the radical SAM superfamily. RlmN family. [4Fe-4S] cluster is required as a cofactor.

The protein localises to the cytoplasm. It catalyses the reaction adenosine(2503) in 23S rRNA + 2 reduced [2Fe-2S]-[ferredoxin] + 2 S-adenosyl-L-methionine = 2-methyladenosine(2503) in 23S rRNA + 5'-deoxyadenosine + L-methionine + 2 oxidized [2Fe-2S]-[ferredoxin] + S-adenosyl-L-homocysteine. It carries out the reaction adenosine(37) in tRNA + 2 reduced [2Fe-2S]-[ferredoxin] + 2 S-adenosyl-L-methionine = 2-methyladenosine(37) in tRNA + 5'-deoxyadenosine + L-methionine + 2 oxidized [2Fe-2S]-[ferredoxin] + S-adenosyl-L-homocysteine. Its function is as follows. Specifically methylates position 2 of adenine 2503 in 23S rRNA and position 2 of adenine 37 in tRNAs. m2A2503 modification seems to play a crucial role in the proofreading step occurring at the peptidyl transferase center and thus would serve to optimize ribosomal fidelity. This is Dual-specificity RNA methyltransferase RlmN from Novosphingobium aromaticivorans (strain ATCC 700278 / DSM 12444 / CCUG 56034 / CIP 105152 / NBRC 16084 / F199).